A 1244-amino-acid polypeptide reads, in one-letter code: Ras-specific guanine nucleotide-releasing factor 2 (1244 aa).

One can recognise a PH 1 domain in the interval 22-129 (EGTKRGYLSK…WVEAIQQASY (108 aa)). The stretch at 147 to 189 (VQIVETEKVAANQLRTQLEDQDTEIERLKAEIIALNKTKERMR) forms a coiled coil. An IQ domain is found at 201–230 (DIKKIKKVQSFMRGWLCRRKWKIIVQDYIC). A DH domain is found at 239 to 425 (KRNQIVFNMV…EELSRVMHDE (187 aa)). The 119-residue stretch at 466–584 (PSVERGKLSK…WTSDISQCID (119 aa)) folds into the PH 2 domain. The N-terminal Ras-GEF domain maps to 631–745 (KVPQIRYASV…PVRTRKLSLN (115 aa)). Disordered regions lie at residues 704–743 (NRSG…RKLS), 759–814 (TTSS…NAEV), and 843–879 (PESP…AENS). Residues 706–715 (SGDHVNDKSP) are compositionally biased toward basic and acidic residues. Polar residues predominate over residues 728-743 (SISSRTSSPVRTRKLS). Low complexity-rich tracts occupy residues 759–774 (TTSS…ANPT) and 781–806 (NNNN…QSPG). Positions 1009 to 1241 (SAMEIAEQIT…YDLSLKIEPR (233 aa)) constitute a Ras-GEF domain.

It is found in the cytoplasm. The protein resides in the cell membrane. Its subcellular location is the endoplasmic reticulum membrane. Functionally, functions as a calcium-regulated nucleotide exchange factor activating both Ras and rac1 through the exchange of bound GDP for GTP. May function in synaptic plasticity. The protein is Ras-specific guanine nucleotide-releasing factor 2 (rasgrf2) of Danio rerio (Zebrafish).